A 447-amino-acid polypeptide reads, in one-letter code: Ribosomal protein uS12 methylthiotransferase RimO (447 aa).

Residues 4 to 114 (PKVGFVSLGC…VMEAVHEYVP (111 aa)) form the MTTase N-terminal domain. Residues Cys13, Cys49, Cys78, Cys147, Cys151, and Cys154 each contribute to the [4Fe-4S] cluster site. A Radical SAM core domain is found at 133–370 (LTPKHYAYLK…MQVQQQISAA (238 aa)). The TRAM domain maps to 373–443 (QKRIGQTMTV…EYDLFAKLIK (71 aa)).

Belongs to the methylthiotransferase family. RimO subfamily. The cofactor is [4Fe-4S] cluster.

It is found in the cytoplasm. It catalyses the reaction L-aspartate(89)-[ribosomal protein uS12]-hydrogen + (sulfur carrier)-SH + AH2 + 2 S-adenosyl-L-methionine = 3-methylsulfanyl-L-aspartate(89)-[ribosomal protein uS12]-hydrogen + (sulfur carrier)-H + 5'-deoxyadenosine + L-methionine + A + S-adenosyl-L-homocysteine + 2 H(+). Its function is as follows. Catalyzes the methylthiolation of an aspartic acid residue of ribosomal protein uS12. The chain is Ribosomal protein uS12 methylthiotransferase RimO from Acinetobacter baumannii (strain AB307-0294).